Reading from the N-terminus, the 90-residue chain is Cell division protein CrgA (90 aa).

The segment at 1-25 (MPKARVTKNETAPVSSNPSANRTPV) is disordered. Polar residues predominate over residues 9–22 (NETAPVSSNPSANR). Transmembrane regions (helical) follow at residues 38–58 (VIMFAFMIVGLAWLIVNYLVG) and 67–87 (LGAWNYGIGFGLMIIGLLMTM).

Belongs to the CrgA family.

Its subcellular location is the cell membrane. In terms of biological role, involved in cell division. The protein is Cell division protein CrgA of Corynebacterium glutamicum (strain R).